The following is a 217-amino-acid chain: Oxygen regulatory protein NreC (217 aa).

The 118-residue stretch at 2-119 folds into the Response regulatory domain; that stretch reads KIVIADDHAV…QLISAVRTVY (118 aa). A 4-aspartylphosphate modification is found at aspartate 53. The HTH luxR-type domain maps to 148–213; the sequence is TNDPFRILSK…ELVEYALKKK (66 aa). A DNA-binding region (H-T-H motif) is located at residues 172–191; the sequence is NKEIAEKLFVSVKTVEAHKT.

Phosphorylated by NreB.

It is found in the cytoplasm. Functionally, member of the two-component regulatory system NreB/NreC involved in the control of dissimilatory nitrate/nitrite reduction in response to oxygen. Phosphorylated NreC binds to a GC-rich palindromic sequence at the promoters of the nitrate (narGHJI) and nitrite (nir) reductase operons, as well as the putative nitrate transporter gene narT, and activates their expression. This is Oxygen regulatory protein NreC (nreC) from Staphylococcus carnosus (strain TM300).